The primary structure comprises 108 residues: MIKTTLLFFATALCEIIGCFLPWLWLKRNASIWLLLPAGISLALFVWLLTLHPAASGRIYAAYGGVYVCTALMWLRVVDGVKLTLYDWTGALIALCGMLIIVAGWGRT.

The Periplasmic portion of the chain corresponds to 1–5; the sequence is MIKTT. The helical transmembrane segment at 6 to 26 threads the bilayer; that stretch reads LLFFATALCEIIGCFLPWLWL. Topologically, residues 27 to 30 are cytoplasmic; the sequence is KRNA. The chain crosses the membrane as a helical span at residues 31-51; the sequence is SIWLLLPAGISLALFVWLLTL. Residues 52-60 lie on the Periplasmic side of the membrane; sequence HPAASGRIY. A helical membrane pass occupies residues 61–81; it reads AAYGGVYVCTALMWLRVVDGV. Topologically, residues 82 to 84 are cytoplasmic; it reads KLT. The helical transmembrane segment at 85–105 threads the bilayer; sequence LYDWTGALIALCGMLIIVAGW. The Periplasmic segment spans residues 106–108; that stretch reads GRT.

The protein belongs to the UPF0060 family.

The protein localises to the cell inner membrane. The sequence is that of UPF0060 membrane protein YnfA from Shigella dysenteriae serotype 1 (strain Sd197).